We begin with the raw amino-acid sequence, 232 residues long: 5'-methylthioadenosine/S-adenosylhomocysteine nucleosidase (232 aa).

The active-site Proton acceptor is glutamate 12. Substrate-binding positions include glycine 78, isoleucine 152, and 173–174 (ME). Aspartate 197 serves as the catalytic Proton donor.

The protein belongs to the PNP/UDP phosphorylase family. MtnN subfamily. As to quaternary structure, homodimer.

The catalysed reaction is S-adenosyl-L-homocysteine + H2O = S-(5-deoxy-D-ribos-5-yl)-L-homocysteine + adenine. The enzyme catalyses S-methyl-5'-thioadenosine + H2O = 5-(methylsulfanyl)-D-ribose + adenine. It carries out the reaction 5'-deoxyadenosine + H2O = 5-deoxy-D-ribose + adenine. The protein operates within amino-acid biosynthesis; L-methionine biosynthesis via salvage pathway; S-methyl-5-thio-alpha-D-ribose 1-phosphate from S-methyl-5'-thioadenosine (hydrolase route): step 1/2. Its function is as follows. Catalyzes the irreversible cleavage of the glycosidic bond in both 5'-methylthioadenosine (MTA) and S-adenosylhomocysteine (SAH/AdoHcy) to adenine and the corresponding thioribose, 5'-methylthioribose and S-ribosylhomocysteine, respectively. Also cleaves 5'-deoxyadenosine, a toxic by-product of radical S-adenosylmethionine (SAM) enzymes, into 5-deoxyribose and adenine. Thus, is required for in vivo function of the radical SAM enzymes biotin synthase and lipoic acid synthase, that are inhibited by 5'-deoxyadenosine accumulation. In Enterobacter sp. (strain 638), this protein is 5'-methylthioadenosine/S-adenosylhomocysteine nucleosidase.